A 315-amino-acid polypeptide reads, in one-letter code: MDMTVSNQKAESDDGSDIDDAALLQKINSLPIDQSITNSVSLEKHDFQGSDDHDSSTDLSDSTLEDVEGSEWADVSRGRYFGSDPSESIVCHNCKGNGHISKDCPHVLCTTCGAIDDHISVRCPWTKKCMNCGLLGHIAARCSEPRKRGPRVCRTCHTDTHTSSTCPLIWRYYVEKEHPVRIDVSEVRKFCYNCASDEHFGDDCTLPSRSNYPESTAFCEANCPSGNDASNKEFFETRRKEFQLERREQNRNQKSSKQRPFHKPGNSLASRLGSKPKSFKRKHSPPSEENGNLSFHSSDGRKFTKTSKKNRKRKW.

Phosphoserine is present on residues Ser-12 and Ser-16. Basic and acidic residues predominate over residues 43–56 (EKHDFQGSDDHDSS). The interval 43-68 (EKHDFQGSDDHDSSTDLSDSTLEDVE) is disordered. CCHC-type zinc fingers lie at residues 89 to 106 (IVCHNCKGNGHISKDCPH), 127 to 144 (KKCMNCGLLGHIAARCSE), and 189 to 206 (KFCYNCASDEHFGDDCTL). The tract at residues 244 to 315 (LERREQNRNQ…TSKKNRKRKW (72 aa)) is disordered. Over residues 287 to 297 (SEENGNLSFHS) the composition is skewed to polar residues. Residues 303 to 315 (FTKTSKKNRKRKW) show a composition bias toward basic residues.

Belongs to the AIR1 family. In terms of assembly, component of the TRAMP complex composed of at least cid14, mtr4, and air1.

The protein resides in the nucleus. It is found in the nucleolus. Component of the TRAMP (TRF4) and TRAMP5 complexes which have a poly(A) RNA polymerase activity and are involved in a post-transcriptional quality control mechanism limiting inappropriate expression of genetic information. Polyadenylation is required for the degradative activity of the exosome on several of its nuclear RNA substrates like cryptic transcripts generated by RNA polymerase II and III, or hypomethylated pre-tRNAi-Met. Both complexes polyadenylate RNA processing and degradation intermediates of snRNAs, snoRNAs and mRNAs that accumulate in strains lacking a functional exosome. The sequence is that of Protein air1 (air1) from Schizosaccharomyces pombe (strain 972 / ATCC 24843) (Fission yeast).